We begin with the raw amino-acid sequence, 428 residues long: Histidine--tRNA ligase (428 aa).

Belongs to the class-II aminoacyl-tRNA synthetase family. As to quaternary structure, homodimer.

Its subcellular location is the cytoplasm. It catalyses the reaction tRNA(His) + L-histidine + ATP = L-histidyl-tRNA(His) + AMP + diphosphate + H(+). The sequence is that of Histidine--tRNA ligase from Chromohalobacter salexigens (strain ATCC BAA-138 / DSM 3043 / CIP 106854 / NCIMB 13768 / 1H11).